The primary structure comprises 154 residues: PTS system glucose-specific EIIA component (154 aa).

The PTS EIIA type-1 domain maps to 26 to 130; the sequence is DEVFKERMLG…SIKSPIIFTN (105 aa). 2 residues coordinate Zn(2+): H63 and H78. The Tele-phosphohistidine intermediate; for EIIA activity role is filled by H78. Position 78 is a phosphohistidine; by HPr (H78).

Heterodimer with glycerol kinase (glpk). It depends on Zn(2+) as a cofactor.

It is found in the cytoplasm. In terms of biological role, the phosphoenolpyruvate-dependent sugar phosphotransferase system (sugar PTS), a major carbohydrate active transport system, catalyzes the phosphorylation of incoming sugar substrates concomitantly with their translocation across the cell membrane. The enzyme II complex composed of PtsG and Crr is involved in glucose transport. The polypeptide is PTS system glucose-specific EIIA component (crr) (Mycoplasma capricolum subsp. capricolum (strain California kid / ATCC 27343 / NCTC 10154)).